The primary structure comprises 264 residues: uncharacterized protein (264 aa).

A run of 3 helical transmembrane segments spans residues 48-68 (LTIT…LLVF), 112-132 (ITPS…FLLA), and 142-162 (LPIA…SYLI). S260 bears the Phosphoserine mark.

The protein resides in the membrane. This is an uncharacterized protein from Schizosaccharomyces pombe (strain 972 / ATCC 24843) (Fission yeast).